A 197-amino-acid chain; its full sequence is RNA polymerase II subunit A C-terminal domain phosphatase ssup-72 (197 aa).

Ser-39 is subject to Phosphoserine.

Belongs to the SSU72 phosphatase family. May interact with synd-1 (via C-terminus); the interaction may prevent ssup-72 binding to RNA polymerase II ama-1. May interact with RNA polymerase II ama-1. In terms of processing, may be phosphorylated by kin-20. In terms of tissue distribution, expressed in epidermis, intestine and nervous system.

The protein resides in the nucleus. The enzyme catalyses O-phospho-L-seryl-[protein] + H2O = L-seryl-[protein] + phosphate. It catalyses the reaction O-phospho-L-threonyl-[protein] + H2O = L-threonyl-[protein] + phosphate. Its function is as follows. Protein phosphatase that dephosphorylates 'Ser-5' of the heptad repeats YSPTSPS in the C-terminal domain of the large RNA polymerase II subunit ama-1. By regulating the phosphorylation status of ama-1 and thus ama-1 binding to specific polyadenylation sites, regulates alternative polyadenylation of pre-mRNAs, including unc-44 and dlk-1 mRNAs. This results in the tissue-specific expression of unc-44 isoforms. This is RNA polymerase II subunit A C-terminal domain phosphatase ssup-72 from Caenorhabditis elegans.